The primary structure comprises 496 residues: probable leucine aminopeptidase 2 (496 aa).

The signal sequence occupies residues methionine 1–glycine 16. Residues proline 111–lysine 205 enclose the PA domain. N-linked (GlcNAc...) asparagine glycosylation occurs at asparagine 224. Zn(2+)-binding residues include histidine 248 and aspartate 260. Glutamate 292 serves as the catalytic Proton acceptor. Glutamate 293 contacts Zn(2+). Asparagine 307 is a glycosylation site (N-linked (GlcNAc...) asparagine). Aspartate 321 lines the Zn(2+) pocket. Residues asparagine 341 and asparagine 402 are each glycosylated (N-linked (GlcNAc...) asparagine). Residue histidine 419 coordinates Zn(2+). N-linked (GlcNAc...) asparagine glycans are attached at residues asparagine 424 and asparagine 458. Residues lysine 475–alanine 496 are disordered.

The protein belongs to the peptidase M28 family. M28A subfamily. In terms of assembly, monomer. Requires Zn(2+) as cofactor.

It is found in the secreted. Functionally, extracellular aminopeptidase that releases a wide variety of amino acids from natural peptides. This is probable leucine aminopeptidase 2 (lap2) from Aspergillus oryzae (strain ATCC 42149 / RIB 40) (Yellow koji mold).